The primary structure comprises 139 residues: MNMTKMAKANEIKREWVVLDAEGKTFGRLMTQVATLLRGKHRPDYTPHVDCGDFVVIVNASKVVFSGLKLEAKEYFTHSGYFGSTKSQTLQELLEKNPEKLFRLAARGMLPKTKLGRAMLKKLKVYAGAEHPHTAQVTK.

This sequence belongs to the universal ribosomal protein uL13 family. As to quaternary structure, part of the 50S ribosomal subunit.

In terms of biological role, this protein is one of the early assembly proteins of the 50S ribosomal subunit, although it is not seen to bind rRNA by itself. It is important during the early stages of 50S assembly. The protein is Large ribosomal subunit protein uL13 of Wolinella succinogenes (strain ATCC 29543 / DSM 1740 / CCUG 13145 / JCM 31913 / LMG 7466 / NCTC 11488 / FDC 602W) (Vibrio succinogenes).